Reading from the N-terminus, the 262-residue chain is pFDCC methylesterase MES16 (262 aa).

Ser87 functions as the Acyl-ester intermediate in the catalytic mechanism. Residues Asp211 and His239 each act as charge relay system in the active site.

The protein belongs to the AB hydrolase superfamily. Methylesterase family.

The protein localises to the cytoplasm. The enzyme catalyses methyl (indol-3-yl)acetate + H2O = (indol-3-yl)acetate + methanol + H(+). It carries out the reaction methyl (-)-jasmonate + H2O = jasmonate + methanol + H(+). It catalyses the reaction primary fluorescent dioxobilin-type chlorophyll catabolite + H2O = O13(4)-desmethyl pFDCC + methanol + H(+). It functions in the pathway plant hormone biosynthesis. It participates in lipid metabolism; oxylipin biosynthesis. The protein operates within porphyrin-containing compound metabolism; chlorophyll degradation. Its function is as follows. Involved in the chlorophyll breakdown by its action in fluorescent chlorophyll catabolites (FCCs) demethylation. Demethylates the C13(2)-carboxymethyl group present at the isocyclic ring of chlorophyll. Uses primary fluorescent dioxobilin-type chlorophyll catabolite (pFDCC) as substrate to produce O13(4)-desmethyl pFDCC. Also able to catalyze pheophorbides in vitro. Methylesterase shown to have carboxylesterase activity, methyl indole-3-acetic acid (MeIAA) esterase activity and methyl jasmonate (MeJA) esterase activity in vitro. The protein is pFDCC methylesterase MES16 of Arabidopsis thaliana (Mouse-ear cress).